A 135-amino-acid polypeptide reads, in one-letter code: Lymphocyte antigen 6 complex locus protein G6d (135 aa).

Positions methionine 1–glycine 19 are cleaved as a signal peptide. The region spanning threonine 22–leucine 121 is the UPAR/Ly6 domain. Disulfide bonds link cysteine 24–cysteine 48, cysteine 27–cysteine 35, cysteine 42–cysteine 76, cysteine 82–cysteine 101, and cysteine 102–cysteine 107. A glycan (O-linked (GalNAc...) threonine) is linked at threonine 68. Asparagine 108 is lipidated: GPI-anchor amidated asparagine. The propeptide at serine 109 to leucine 135 is removed in mature form.

Homodimer. In terms of processing, O-glycosylated. As to expression, expressed in embryonic tissue and adult lung, kidney, brain, liver and spleen.

It is found in the cell membrane. Its subcellular location is the cell projection. It localises to the filopodium. The protein is Lymphocyte antigen 6 complex locus protein G6d (Ly6g6d) of Mus musculus (Mouse).